Here is a 454-residue protein sequence, read N- to C-terminus: tRNA modification GTPase MnmE (454 aa).

(6S)-5-formyl-5,6,7,8-tetrahydrofolate is bound by residues R23, E80, and K120. The region spanning 216–377 (GMKVVIAGRP…LRDHLKQSMG (162 aa)) is the TrmE-type G domain. N226 provides a ligand contact to K(+). GTP-binding positions include 226-231 (NAGKSS), 245-251 (TDIAGTT), 270-273 (DTAG), 335-338 (NKAD), and 358-360 (SAR). A Mg(2+)-binding site is contributed by S230. Residues T245, I247, and T250 each contribute to the K(+) site. A Mg(2+)-binding site is contributed by T251. Residue K454 coordinates (6S)-5-formyl-5,6,7,8-tetrahydrofolate.

The protein belongs to the TRAFAC class TrmE-Era-EngA-EngB-Septin-like GTPase superfamily. TrmE GTPase family. In terms of assembly, homodimer. Heterotetramer of two MnmE and two MnmG subunits. The cofactor is K(+).

The protein resides in the cytoplasm. Exhibits a very high intrinsic GTPase hydrolysis rate. Involved in the addition of a carboxymethylaminomethyl (cmnm) group at the wobble position (U34) of certain tRNAs, forming tRNA-cmnm(5)s(2)U34. In Yersinia pestis bv. Antiqua (strain Antiqua), this protein is tRNA modification GTPase MnmE.